We begin with the raw amino-acid sequence, 144 residues long: Large ribosomal subunit protein uL13 (144 aa).

The protein belongs to the universal ribosomal protein uL13 family. As to quaternary structure, part of the 50S ribosomal subunit.

Functionally, this protein is one of the early assembly proteins of the 50S ribosomal subunit, although it is not seen to bind rRNA by itself. It is important during the early stages of 50S assembly. The protein is Large ribosomal subunit protein uL13 of Clostridium perfringens (strain ATCC 13124 / DSM 756 / JCM 1290 / NCIMB 6125 / NCTC 8237 / Type A).